The sequence spans 305 residues: 4-hydroxy-tetrahydrodipicolinate synthase 1 (305 aa).

Thr-53 contacts pyruvate. Tyr-141 (proton donor/acceptor) is an active-site residue. Residue Lys-169 is the Schiff-base intermediate with substrate of the active site. Val-209 contributes to the pyruvate binding site.

Belongs to the DapA family. Homotetramer; dimer of dimers.

It is found in the cytoplasm. The enzyme catalyses L-aspartate 4-semialdehyde + pyruvate = (2S,4S)-4-hydroxy-2,3,4,5-tetrahydrodipicolinate + H2O + H(+). It participates in amino-acid biosynthesis; L-lysine biosynthesis via DAP pathway; (S)-tetrahydrodipicolinate from L-aspartate: step 3/4. In terms of biological role, catalyzes the condensation of (S)-aspartate-beta-semialdehyde [(S)-ASA] and pyruvate to 4-hydroxy-tetrahydrodipicolinate (HTPA). This is 4-hydroxy-tetrahydrodipicolinate synthase 1 from Streptomyces coelicolor (strain ATCC BAA-471 / A3(2) / M145).